The chain runs to 667 residues: Probable potassium transport system protein Kup (667 aa).

Helical transmembrane passes span 16–36 (GFIIALGIVYGDIGTSPLYTM), 58–78 (VSLIIWTLTLITTIKYVLIAL), 101–121 (WLIIPAMLGGATLLSDGALTP), 146–166 (TNVILTTLLILMVLFGLQRFG), 167–187 (TGVIGKLFGPVMLVWFSVLGI), 221–241 (IFILGSIFLATTGAEALYSDL), 253–273 (WPFVKVCIILSYCGQAAWILA), 294–314 (VYLVILATLAAIIASQALISG), 343–363 (LYIPVINWSLFAVTSCTVLYF), 373–393 (YGLAITITMLMTTILLAYYLI), 399–419 (PLLASLLMAFFAFIEFIFFLA), and 431–451 (VVVLALAIVFVMVIWHAGTVI).

It belongs to the HAK/KUP transporter (TC 2.A.72) family.

Its subcellular location is the cell membrane. The catalysed reaction is K(+)(in) + H(+)(in) = K(+)(out) + H(+)(out). Functionally, transport of potassium into the cell. Likely operates as a K(+):H(+) symporter. In Streptococcus equi subsp. zooepidemicus (strain MGCS10565), this protein is Probable potassium transport system protein Kup.